The primary structure comprises 352 residues: Glucose 1-dehydrogenase 1 (352 aa).

Cys-35 contacts Zn(2+). Thr-37 provides a ligand contact to substrate. 2 residues coordinate Zn(2+): His-60 and Glu-61. Substrate is bound at residue Asn-83. Positions 87, 90, 93, and 101 each coordinate Zn(2+). Substrate is bound by residues Glu-108, Gln-144, and Asp-148. Gln-144 contributes to the Zn(2+) binding site. Residues 182-185, 204-206, 264-266, 292-294, and Lys-341 contribute to the NADP(+) site; these read TGTI, NKR, FGF, and LIN. Asn-294 is a binding site for substrate.

The protein belongs to the zinc-containing alcohol dehydrogenase family. Glucose 1-dehydrogenase subfamily. Zn(2+) serves as cofactor.

It catalyses the reaction D-glucose + NAD(+) = D-glucono-1,5-lactone + NADH + H(+). It carries out the reaction D-glucose + NADP(+) = D-glucono-1,5-lactone + NADPH + H(+). Catalyzes the NAD(P)(+)-dependent oxidation of D-glucose to D-gluconate via gluconolactone. Can utilize both NAD(+) and NADP(+) as electron acceptor. Is involved in the degradation of glucose through a non-phosphorylative variant of the Entner-Doudoroff pathway. The protein is Glucose 1-dehydrogenase 1 of Picrophilus torridus (strain ATCC 700027 / DSM 9790 / JCM 10055 / NBRC 100828 / KAW 2/3).